Here is a 718-residue protein sequence, read N- to C-terminus: Zinc finger protein 39 (718 aa).

Positions 59 to 130 (VSFEDVSVDF…EDVPKQSRAD (72 aa)) constitute a KRAB domain. The C2H2-type 1 zinc finger occupies 298–320 (FECSICKKTFCTKCELMKHKKIH). A C2H2-type 2; degenerate zinc finger spans residues 353–375 (HRCKQCEKCFHQKNQQNVHERVP). 11 consecutive C2H2-type zinc fingers follow at residues 409-431 (YGCN…QKIH), 437-459 (YGCE…QRTH), 465-487 (YECK…HRTH), 493-515 (YECD…QKVH), 521-543 (YECE…QKTH), 549-571 (YECN…QGTH), 577-599 (YQCE…QRNH), 605-627 (YACE…QRSH), 633-655 (YSCE…QRTH), 661-683 (YECK…QVTH), and 689-711 (FECQ…QRIH).

In terms of tissue distribution, predominantly in the spermatocytes and spermatids of testes.

The protein localises to the nucleus. Functionally, a putative DNA-binding regulatory protein associated with meiosis in spermatogenesis. The protein is Zinc finger protein 39 (Zfp39) of Mus musculus (Mouse).